The following is a 287-amino-acid chain: Small ribosomal subunit protein uS2 (287 aa).

Residues 254 to 277 are compositionally biased toward low complexity; it reads LASATASATPSATASTTALTDAPA. Residues 254 to 287 form a disordered region; the sequence is LASATASATPSATASTTALTDAPAGATEPTTDAS.

Belongs to the universal ribosomal protein uS2 family.

The sequence is that of Small ribosomal subunit protein uS2 (rpsB) from Mycobacterium tuberculosis (strain CDC 1551 / Oshkosh).